The primary structure comprises 308 residues: MNWITNYVRPKINSMLGRRTDMPENLWIKDPETGEMVFHKDLESNQFVIPSSGHHMKISAKERLKYFLDDGRYEQLENPKVVLDPLKFRDEKRYTDRLKDAKAKTGLEDAIVNALGTIEGLPVVVTVQDFAFMGGSLGMAAGDAIVHAFEVALQRKRPLILFAASGGARMQEGILSLMQLPRTTVGVDRLKEAGLPYIVVLTNPTTGGVTASYAMLGDVHIAEPGALIGFAGPRVIEQTIREKLPDGFQRSEYLMEHGMVDMVVSRLEMRQTIARLLKMLLKMPGEQKPLEPEILPPAVVAAEARPQA.

The CoA carboxyltransferase N-terminal domain maps to 26 to 295; sequence LWIKDPETGE…EQKPLEPEIL (270 aa).

Belongs to the AccD/PCCB family. Acetyl-CoA carboxylase is a heterohexamer composed of biotin carboxyl carrier protein (AccB), biotin carboxylase (AccC) and two subunits each of ACCase subunit alpha (AccA) and ACCase subunit beta (AccD).

The protein localises to the cytoplasm. It catalyses the reaction N(6)-carboxybiotinyl-L-lysyl-[protein] + acetyl-CoA = N(6)-biotinyl-L-lysyl-[protein] + malonyl-CoA. It participates in lipid metabolism; malonyl-CoA biosynthesis; malonyl-CoA from acetyl-CoA: step 1/1. Component of the acetyl coenzyme A carboxylase (ACC) complex. Biotin carboxylase (BC) catalyzes the carboxylation of biotin on its carrier protein (BCCP) and then the CO(2) group is transferred by the transcarboxylase to acetyl-CoA to form malonyl-CoA. This chain is Acetyl-coenzyme A carboxylase carboxyl transferase subunit beta, found in Mesorhizobium japonicum (strain LMG 29417 / CECT 9101 / MAFF 303099) (Mesorhizobium loti (strain MAFF 303099)).